The sequence spans 83 residues: Hainantoxin-III 9 (83 aa).

A signal peptide spans 1-21 (MKASMFLALAGLALLFVVCYA). Positions 22–48 (SESEEKEFPIELLSKIFAVDVFKGEER) are excised as a propeptide. 3 cysteine pairs are disulfide-bonded: cysteine 50–cysteine 65, cysteine 57–cysteine 70, and cysteine 64–cysteine 77. Leucine amide is present on leucine 81.

Belongs to the neurotoxin 10 (Hwtx-1) family. 15 (Hntx-3) subfamily. In terms of assembly, monomer. In terms of tissue distribution, expressed by the venom gland.

The protein resides in the secreted. Its function is as follows. Selective antagonist of neuronal tetrodotoxin (TTX)-sensitive voltage-gated sodium channels (IC(50)=1270 nM on Nav1.1/SCN1A, 270 nM on Nav1.2/SCN2A, 491 nM on Nav1.3/SCN3A and 232 nM on Nav1.7/SCN9A). This toxin suppress Nav1.7 current amplitude without significantly altering the activation, inactivation, and repriming kinetics. Short extreme depolarizations partially activate the toxin-bound channel, indicating voltage-dependent inhibition of this toxin. This toxin increases the deactivation of the Nav1.7 current after extreme depolarizations. The toxin-Nav1.7 complex is gradually dissociated upon prolonged strong depolarizations in a voltage-dependent manner, and the unbound toxin rebinds to Nav1.7 after a long repolarization. Moreover, analysis of chimeric channels showed that the DIIS3-S4 linker is critical for toxin binding to Nav1.7. These data are consistent with this toxin interacting with Nav1.7 site 4 and trapping the domain II voltage sensor in the closed state. The polypeptide is Hainantoxin-III 9 (Cyriopagopus hainanus (Chinese bird spider)).